A 547-amino-acid chain; its full sequence is ATP synthase subunit alpha (547 aa).

172 to 179 (GDRKTGKT) is a binding site for ATP.

Belongs to the ATPase alpha/beta chains family. As to quaternary structure, F-type ATPases have 2 components, CF(1) - the catalytic core - and CF(0) - the membrane proton channel. CF(1) has five subunits: alpha(3), beta(3), gamma(1), delta(1), epsilon(1). CF(0) has three main subunits: a(1), b(2) and c(9-12). The alpha and beta chains form an alternating ring which encloses part of the gamma chain. CF(1) is attached to CF(0) by a central stalk formed by the gamma and epsilon chains, while a peripheral stalk is formed by the delta and b chains.

The protein localises to the cell membrane. It carries out the reaction ATP + H2O + 4 H(+)(in) = ADP + phosphate + 5 H(+)(out). Produces ATP from ADP in the presence of a proton gradient across the membrane. The alpha chain is a regulatory subunit. This Corynebacterium glutamicum (strain R) protein is ATP synthase subunit alpha.